The following is a 910-amino-acid chain: Protein CHROMATIN REMODELING 25 (910 aa).

Acidic residues-rich tracts occupy residues 1 to 18 (MEEEDEEILSSSDCDDSS) and 26 to 39 (QDSEGENDNPECED). The segment at 1-39 (MEEEDEEILSSSDCDDSSDSYKDDSQDSEGENDNPECED) is disordered. In terms of domain architecture, Helicase ATP-binding spans 198–371 (LHGSANINGC…FAMVNFTNPG (174 aa)). 211–218 (DDMGLGKT) contacts ATP. The DEAH box signature appears at 322–325 (DEAH). Residues 396 to 417 (TEEEKNLAADRSAELSSKVNQF) are a coiled coil. A Helicase C-terminal domain is found at 538–696 (VLSRLLANLR…QTDNSTRQGN (159 aa)). Residues 828-861 (VSPKTVESEEHNRNQPVNKRAFNKPQQRPREPLQ) are disordered.

It belongs to the SNF2/RAD54 helicase family. As to quaternary structure, interacts with RAD51. Binds to the geminivirus mungbean yellow mosaic virus (MYMV) and to the tomato leaf curl virus (ToLCV) replication-associated proteins. In terms of tissue distribution, expressed ubiquitously, with the highest levels of expression in flower buds. Present in flower buds (at protein level).

Its subcellular location is the nucleus. Dissociates RAD51 from nucleoprotein filaments formed on dsDNA. Could be involved in the turnover of RAD51 protein-dsDNA filaments. Addition of RAD54 overcomes inhibition of DNA strand exchange by RAD51 bound to substrate dsDNA. Species preference in the RAD51 dissociation and DNA strand exchange assays underlines the importance of specific RAD54-RAD51 interactions. RAD51 is unable to release dsDNA upon ATP hydrolysis, leaving it stuck on the heteroduplex DNA product after DNA strand exchange. Involved in DNA repair and mitotic recombination. Functions in the homologous recombinational DNA repair (RAD52) pathway. Required for synthesis-dependent strand annealing (SDSA) during double-strand break repair. In terms of biological role, facilitates geminiviral replication (e.g. geminivirus mungbean yellow mosaic virus (MYMV) and tomato leaf curl virus (ToLCV)). In Arabidopsis thaliana (Mouse-ear cress), this protein is Protein CHROMATIN REMODELING 25 (CHR25).